A 143-amino-acid polypeptide reads, in one-letter code: Hemoglobin subunit alpha (143 aa).

The Globin domain occupies 2 to 143; that stretch reads SLTARDKSVV…LSAALADKYR (142 aa). Histidine 60 provides a ligand contact to O2. Heme b is bound at residue histidine 89.

Belongs to the globin family. In terms of assembly, heterotetramer of two alpha chains and two beta chains. In terms of tissue distribution, red blood cells.

Its function is as follows. Involved in oxygen transport from gills to the various peripheral tissues. This is Hemoglobin subunit alpha (hba) from Salmo salar (Atlantic salmon).